The primary structure comprises 461 residues: Protein-serine O-palmitoleoyltransferase porcupine (461 aa).

The Cytoplasmic segment spans residues 1–17; it reads MATFSRQEFFQQLLQGC. A helical membrane pass occupies residues 18–38; it reads LLPTAQQGLDQIWLLLAICLA. Residues 39–66 are Extracellular-facing; that stretch reads CRLLWRLGLPSYLKHASTVAGGFFSLYH. Residues 67-87 form a helical membrane-spanning segment; sequence FFQLHMVWVVLLSLLCYLVLF. The Cytoplasmic portion of the chain corresponds to 88–95; the sequence is LCRHSSHR. A helical transmembrane segment spans residues 96–116; the sequence is GVFLSVTILIYLLMGEMHMVD. Over 117 to 152 the chain is Extracellular; sequence TVTWHKMRGAQMIVAMKAVSLGFDLDRGEVGTVPSP. A helical membrane pass occupies residues 153-173; it reads VEFMGYLYFVGTIVFGPWISF. Topologically, residues 174–198 are cytoplasmic; the sequence is HSYLQAVQGRPLSCRWLQKVARSLA. Cys-187 is lipidated: S-palmitoyl cysteine. A helical membrane pass occupies residues 199-219; that stretch reads LALLCLVLSTCVGPYLFPYFI. Residues 220-252 lie on the Extracellular side of the membrane; that stretch reads PLNGDRLLRNKKRKARGTMVRWLRAYESAVSFH. A helical transmembrane segment spans residues 253–273; it reads FSNYFVGFLSEATATLAGAGF. The Cytoplasmic segment spans residues 274–337; it reads TEEKDHLEWD…SAVLVTYAAS (64 aa). Residues 338 to 358 traverse the membrane as a helical segment; the sequence is ALLHGFSFHLAAVLLSLAFIT. His-341 is an active-site residue. Topologically, residues 359–396 are extracellular; the sequence is YVEHVLRKRLARILSACVLSKRCPPDCSHQHRLGLGVR. A helical transmembrane segment spans residues 397–417; the sequence is ALNLLFGALAIFHLAYLGSLF. At 418-461 the chain is on the cytoplasmic side; that stretch reads DVDVDDTTEEQGYGMAYTVHKWSELSWASHWVTFGCWIFYRLIG.

It belongs to the membrane-bound acyltransferase family. Porcupine subfamily. In terms of assembly, interacts with WNT1, WNT3, WNT3A, WNT4, WNT5A, WNT5B, WNT6, WNT7A and WNT7B. In terms of tissue distribution, isoform 1 is expressed in fetal brain, brain, amygdala, caudate nucleus, cerebellum, hippocampus, pituitary, thalamus, heart, skeletal muscle and testis. Isoform 4 is expressed in amygdala, corpus callosum, hippocampus, spinal cord, kidney, liver, lung, spleen, uterus, testis. Isoform 2 and isoform 3 are expressed in substantia negra, spinal cord, heart and lung.

It localises to the endoplasmic reticulum membrane. It carries out the reaction [Wnt protein]-L-serine + (9Z)-hexadecenoyl-CoA = [Wnt protein]-O-(9Z)-hexadecenoyl-L-serine + CoA. Protein-serine O-palmitoleoyltransferase that acts as a key regulator of the Wnt signaling pathway by mediating the attachment of palmitoleate, a 16-carbon monounsaturated fatty acid (C16:1(9Z)), to Wnt proteins. Serine palmitoleoylation of WNT proteins is required for efficient binding to frizzled receptors. The protein is Protein-serine O-palmitoleoyltransferase porcupine of Homo sapiens (Human).